Consider the following 584-residue polypeptide: Protein spire homolog 1 (584 aa).

A disordered region spans residues 1–30 (MANTVEADGSNDEGYEAAEEGPEDEEDEKR). In terms of domain architecture, KIND spans 1 to 73 (MANTVEADGS…RALFAETMEL (73 aa)). Residues 9-28 (GSNDEGYEAAEEGPEDEEDE) show a composition bias toward acidic residues. Positions 71 to 99 (MELHTFLAKVKSAKENLKKIQEMEKSDES) form a coiled coil. 2 WH2 domains span residues 147-165 (PYEM…LRKV) and 211-228 (LHER…LRPV). Residues 224 to 238 (KLRPVSPEEIRRSRL) are compositionally biased toward basic and acidic residues. The disordered stretch occupies residues 224–366 (KLRPVSPEEI…PTNVRQFLPP (143 aa)). A Phosphoserine modification is found at serine 229. The segment covering 242–272 (TPESTKNLMESSMVNGGLTSQTKENGLSSAE) has biased composition (polar residues). Phosphoserine is present on residues serine 292, serine 293, and serine 295. Over residues 302–320 (KSTSSSSVSPSFPEEPVLE) the composition is skewed to low complexity. Threonine 337 is modified (phosphothreonine). Residues 340–356 (PERRQPPQRRHSIEKET) show a composition bias toward basic and acidic residues. Polar residues predominate over residues 357–366 (PTNVRQFLPP). The tract at residues 384 to 404 (LALTVEEVMHIRQVLVKAELE) is spir-box. Phosphoserine occurs at positions 506, 510, and 563.

It belongs to the spire family. In terms of assembly, interacts with FMN2.

It is found in the cytoplasm. The protein resides in the cytoskeleton. The protein localises to the cytosol. It localises to the cleavage furrow. Its subcellular location is the perinuclear region. It is found in the cell membrane. The protein resides in the cytoplasmic vesicle membrane. Functionally, acts as an actin nucleation factor, remains associated with the slow-growing pointed end of the new filament. Involved in intracellular vesicle transport along actin fibers, providing a novel link between actin cytoskeleton dynamics and intracellular transport. Required for asymmetric spindle positioning and asymmetric cell division during meiosis. Required for normal formation of the cleavage furrow and for polar body extrusion during female germ cell meiosis. Also acts in the nucleus: together with FMN2, promotes assembly of nuclear actin filaments in response to DNA damage in order to facilitate movement of chromatin and repair factors after DNA damage. In addition, promotes innate immune signaling downstream of dsRNA sensing. Mechanistically, contributes to IRF3 phosphorylation and activation downstream of MAVS and upstream of TBK1. This chain is Protein spire homolog 1 (SPIRE1), found in Macaca fascicularis (Crab-eating macaque).